Consider the following 365-residue polypeptide: MAVNTQPIIRLTNVTKSYGEHQVLKNINLDLEAGKFYTLLGPSGCGKTTILRTIAGFTDATSGQVYFDGQVINTLPANQRQVNTVFQDYALFPHMNVAENVAFGLKLHKVPKDEIETRVQKALAMVQLADLGEREISEISGGQQQRVAIARALVMQPKVLLLDEPLSALDAKLRKDMQYELRDLQQRLGITFLFVTHDQEEALAMSDEIFVMNAGEILQGGSPVDIYDEPINHFVANFIGESNIIPGKMLKDFEVEFVGKQFECADAGMQPNEAVEVVLRPEDLDIVAANQGKLVVTVDSQLFRGNYFEIVAYDTDHNEWLVHSTNPAAEGEPIGLTFDPQDIHVMRLNESEAAFDARLEQYEDD.

The 231-residue stretch at Ile9–Ile239 folds into the ABC transporter domain. Gly41–Thr48 is an ATP binding site.

This sequence belongs to the ABC transporter superfamily. Spermidine/putrescine importer (TC 3.A.1.11.1) family. The complex is composed of two ATP-binding proteins (PotA), two transmembrane proteins (PotB and PotC) and a solute-binding protein (PotD).

The protein localises to the cell membrane. It catalyses the reaction ATP + H2O + polyamine-[polyamine-binding protein]Side 1 = ADP + phosphate + polyamineSide 2 + [polyamine-binding protein]Side 1.. Part of the ABC transporter complex PotABCD involved in spermidine/putrescine import. Responsible for energy coupling to the transport system. This is Spermidine/putrescine import ATP-binding protein PotA from Lactiplantibacillus plantarum (strain ATCC BAA-793 / NCIMB 8826 / WCFS1) (Lactobacillus plantarum).